A 372-amino-acid chain; its full sequence is Phenylalanine--tRNA ligase alpha subunit (372 aa).

Glutamate 276 is a binding site for Mg(2+).

Belongs to the class-II aminoacyl-tRNA synthetase family. Phe-tRNA synthetase alpha subunit type 1 subfamily. In terms of assembly, tetramer of two alpha and two beta subunits. Mg(2+) is required as a cofactor.

Its subcellular location is the cytoplasm. It catalyses the reaction tRNA(Phe) + L-phenylalanine + ATP = L-phenylalanyl-tRNA(Phe) + AMP + diphosphate + H(+). In Thermobifida fusca (strain YX), this protein is Phenylalanine--tRNA ligase alpha subunit.